The primary structure comprises 218 residues: Orotate phosphoribosyltransferase (218 aa).

Residue Lys-26 coordinates 5-phospho-alpha-D-ribose 1-diphosphate. 34-35 (FF) is an orotate binding site. 5-phospho-alpha-D-ribose 1-diphosphate-binding positions include 72-73 (YK), Arg-99, Lys-100, Lys-103, His-105, and 124-132 (DDVITAGTA). Residues Thr-128 and Arg-156 each contribute to the orotate site.

This sequence belongs to the purine/pyrimidine phosphoribosyltransferase family. PyrE subfamily. Homodimer. Mg(2+) serves as cofactor.

It catalyses the reaction orotidine 5'-phosphate + diphosphate = orotate + 5-phospho-alpha-D-ribose 1-diphosphate. It participates in pyrimidine metabolism; UMP biosynthesis via de novo pathway; UMP from orotate: step 1/2. In terms of biological role, catalyzes the transfer of a ribosyl phosphate group from 5-phosphoribose 1-diphosphate to orotate, leading to the formation of orotidine monophosphate (OMP). This chain is Orotate phosphoribosyltransferase, found in Hamiltonella defensa subsp. Acyrthosiphon pisum (strain 5AT).